The primary structure comprises 259 residues: Flagellar brake protein YcgR (259 aa).

The PilZ domain maps to 129–246 (QRREFYRLQT…DNAIQRYIFK (118 aa)).

This sequence belongs to the YcgR family. As to quaternary structure, monomer. Interacts with the flagellar basal bodies.

It localises to the bacterial flagellum basal body. Its function is as follows. Acts as a flagellar brake, regulating swimming and swarming in a bis-(3'-5') cyclic diguanylic acid (c-di-GMP)-dependent manner. Binds 1 c-di-GMP dimer per subunit. Increasing levels of c-di-GMP lead to decreased motility. The sequence is that of Flagellar brake protein YcgR from Azoarcus sp. (strain BH72).